Consider the following 195-residue polypeptide: MIRKIKPQIRVIGFDDGTFSFKSKIKRDKTILVGVVMKGSQDVVGVVTRWIEVDGRDATEKMIEAIHNSRFKDLRIIMLKGITYAGFNVVDVEELSRETRMPVIIVIRKKPDLQAMEKALKKHFSDAEEKISLLHKAGKIKELIPGKLYYQAIGVSYDQAEEIIRLTQKSSLIPEPLRLAHMIASAVMSGESKKE.

This sequence belongs to the UPF0215 family.

The sequence is that of UPF0215 protein TSIB_1161 from Thermococcus sibiricus (strain DSM 12597 / MM 739).